The primary structure comprises 231 residues: Flagellar L-ring protein (231 aa).

Positions 1-18 (MKRFVSVVALSGVVSLAG) are cleaved as a signal peptide. Residue C19 is the site of N-palmitoyl cysteine attachment. C19 carries the S-diacylglycerol cysteine lipid modification.

This sequence belongs to the FlgH family. The basal body constitutes a major portion of the flagellar organelle and consists of four rings (L,P,S, and M) mounted on a central rod.

It localises to the cell outer membrane. Its subcellular location is the bacterial flagellum basal body. Functionally, assembles around the rod to form the L-ring and probably protects the motor/basal body from shearing forces during rotation. The protein is Flagellar L-ring protein of Pseudomonas fluorescens (strain Pf0-1).